The following is a 371-amino-acid chain: DNA replication and repair protein RecF (371 aa).

Position 30–37 (30–37 (GANAQGKT)) interacts with ATP.

The protein belongs to the RecF family.

It localises to the cytoplasm. Functionally, the RecF protein is involved in DNA metabolism; it is required for DNA replication and normal SOS inducibility. RecF binds preferentially to single-stranded, linear DNA. It also seems to bind ATP. This Lacticaseibacillus casei (strain BL23) (Lactobacillus casei) protein is DNA replication and repair protein RecF.